The chain runs to 433 residues: Probable mannan endo-1,4-beta-mannosidase F (433 aa).

The first 19 residues, 1–19, serve as a signal peptide directing secretion; that stretch reads MKRQALTLIPLLGAAAAQS. In terms of domain architecture, CBM1 spans 20-53; it reads GPYGQCGGNDWSGATTCVSGYVCVYQNEWYSQCV. The segment at 56 to 82 is thr-rich linker; sequence TATSSSTTLTTTTSATTRTTTTTTSTT. Positions 83–433 are catalytic; the sequence is SVPSSTNFPS…TEHMERIAAR (351 aa). N-linked (GlcNAc...) asparagine glycosylation is present at asparagine 97. The substrate site is built by tryptophan 142 and asparagine 255. The Proton donor role is filled by glutamate 256. Tyrosine 331 lines the substrate pocket. The active-site Nucleophile is glutamate 364. Tryptophan 394 contacts substrate.

It belongs to the glycosyl hydrolase 5 (cellulase A) family.

It localises to the secreted. It carries out the reaction Random hydrolysis of (1-&gt;4)-beta-D-mannosidic linkages in mannans, galactomannans and glucomannans.. Endo-1,4-mannanase, a crucial enzyme for depolymerization of seed galactomannans and wood galactoglucomannans. The chain is Probable mannan endo-1,4-beta-mannosidase F (manF) from Emericella nidulans (strain FGSC A4 / ATCC 38163 / CBS 112.46 / NRRL 194 / M139) (Aspergillus nidulans).